The following is a 144-amino-acid chain: HMG1/2-like protein (144 aa).

Disordered regions lie at residues 1–42 (MKGG…PPSA) and 85–144 (PFIS…EDDD). Basic and acidic residues-rich tracts occupy residues 8-35 (AKSD…DPNK) and 89-99 (KAEKRKQEYEK). The HMG box DNA-binding region spans 36–105 (PKRPPSAFFV…EYEKNLQAYN (70 aa)). Residues 126 to 144 (NDDDEDQDGSGEDDSEDDD) show a composition bias toward acidic residues.

This sequence belongs to the HMGB family. Expressed at higher levels in dark-grown tissues, such as roots; and at lower levels in light-grown tissues, such as cotyledons and stems.

The protein localises to the nucleus. The chain is HMG1/2-like protein from Ipomoea nil (Japanese morning glory).